We begin with the raw amino-acid sequence, 417 residues long: NADH-quinone oxidoreductase subunit D (417 aa).

This sequence belongs to the complex I 49 kDa subunit family. As to quaternary structure, NDH-1 is composed of 14 different subunits. Subunits NuoB, C, D, E, F, and G constitute the peripheral sector of the complex.

Its subcellular location is the cell inner membrane. The catalysed reaction is a quinone + NADH + 5 H(+)(in) = a quinol + NAD(+) + 4 H(+)(out). Functionally, NDH-1 shuttles electrons from NADH, via FMN and iron-sulfur (Fe-S) centers, to quinones in the respiratory chain. The immediate electron acceptor for the enzyme in this species is believed to be ubiquinone. Couples the redox reaction to proton translocation (for every two electrons transferred, four hydrogen ions are translocated across the cytoplasmic membrane), and thus conserves the redox energy in a proton gradient. In Aromatoleum aromaticum (strain DSM 19018 / LMG 30748 / EbN1) (Azoarcus sp. (strain EbN1)), this protein is NADH-quinone oxidoreductase subunit D.